The following is a 317-amino-acid chain: Acetyl-coenzyme A carboxylase carboxyl transferase subunit alpha (317 aa).

A CoA carboxyltransferase C-terminal domain is found at 40–293 (LEKRSADALK…GDIITASLRS (254 aa)).

It belongs to the AccA family. In terms of assembly, acetyl-CoA carboxylase is a heterohexamer composed of biotin carboxyl carrier protein (AccB), biotin carboxylase (AccC) and two subunits each of ACCase subunit alpha (AccA) and ACCase subunit beta (AccD).

The protein localises to the cytoplasm. The enzyme catalyses N(6)-carboxybiotinyl-L-lysyl-[protein] + acetyl-CoA = N(6)-biotinyl-L-lysyl-[protein] + malonyl-CoA. Its pathway is lipid metabolism; malonyl-CoA biosynthesis; malonyl-CoA from acetyl-CoA: step 1/1. Functionally, component of the acetyl coenzyme A carboxylase (ACC) complex. First, biotin carboxylase catalyzes the carboxylation of biotin on its carrier protein (BCCP) and then the CO(2) group is transferred by the carboxyltransferase to acetyl-CoA to form malonyl-CoA. The chain is Acetyl-coenzyme A carboxylase carboxyl transferase subunit alpha from Brucella anthropi (strain ATCC 49188 / DSM 6882 / CCUG 24695 / JCM 21032 / LMG 3331 / NBRC 15819 / NCTC 12168 / Alc 37) (Ochrobactrum anthropi).